A 64-amino-acid polypeptide reads, in one-letter code: Large ribosomal subunit protein bL35 (64 aa).

Composition is skewed to basic residues over residues 1 to 15 (MPKQ…KRFR) and 23 to 43 (VRQK…RTRR). The interval 1-64 (MPKQKSHSGA…AGRIKRLLAR (64 aa)) is disordered.

The protein belongs to the bacterial ribosomal protein bL35 family.

The protein is Large ribosomal subunit protein bL35 of Frankia alni (strain DSM 45986 / CECT 9034 / ACN14a).